The sequence spans 420 residues: Homeobox-containing protein 1 (420 aa).

An HNF-p1 domain is found at 18 to 49 (DEPRFTIEQIDLLQRLRRTGMTKHEILHALET). The segment at 56–139 (EHSDKFGRRS…GKMSPTRYHA (84 aa)) is disordered. Lys60 participates in a covalent cross-link: Glycyl lysine isopeptide (Lys-Gly) (interchain with G-Cter in SUMO2). Low complexity-rich tracts occupy residues 64–73 (RSSYGGSSYG) and 81–93 (ASSS…TQTQ). Residues 94–132 (HSGMSPSPSNSYDTSPQPCTTNQNGRENNERLSTSNGKM) are compositionally biased toward polar residues. A Glycyl lysine isopeptide (Lys-Gly) (interchain with G-Cter in SUMO2) cross-link involves residue Lys131. The POU-specific atypical domain occupies 145–241 (RSYSFEASEE…PGATLSMRPA (97 aa)). Ser148 is subject to Phosphoserine. Lys161 participates in a covalent cross-link: Glycyl lysine isopeptide (Lys-Gly) (interchain with G-Cter in SUMO2). Ser170 carries the post-translational modification Phosphoserine. Glycyl lysine isopeptide (Lys-Gly) (interchain with G-Cter in SUMO2) cross-links involve residues Lys174, Lys217, and Lys310. Residues 267-341 (RRGSRFTWRK…NRRKEIKRRA (75 aa)) constitute a DNA-binding region (homeobox). The interval 353–385 (IDVQSPGGHSNSDDVDGNDYSEQDDSTSHSDHQ) is disordered. Over residues 365-377 (DDVDGNDYSEQDD) the composition is skewed to acidic residues. Lys413 participates in a covalent cross-link: Glycyl lysine isopeptide (Lys-Gly) (interchain with G-Cter in SUMO1); alternate. A Glycyl lysine isopeptide (Lys-Gly) (interchain with G-Cter in SUMO2); alternate cross-link involves residue Lys413.

As to quaternary structure, associates with the telomerase holoenzyme complex. Interacts with DKC1, XRCC6 and COIL. Ubiquitous. Detected in pancreas, brain, spleen, placenta, prostate, thymus, liver, heart, bone marrow, skeletal muscle, stomach, uterus, testis, kidney, ovary, colon, lung, cardiac muscle and thyroid gland.

The protein resides in the nucleus. The protein localises to the cytoplasm. It is found in the chromosome. Its subcellular location is the telomere. It localises to the cajal body. The protein resides in the PML body. Its function is as follows. Binds directly to 5'-TTAGGG-3' repeats in telomeric DNA. Associates with the telomerase complex at sites of active telomere processing and positively regulates telomere elongation. Important for TERT binding to chromatin, indicating a role in recruitment of the telomerase complex to telomeres. Also plays a role in the alternative lengthening of telomeres (ALT) pathway in telomerase-negative cells where it promotes formation and/or maintenance of ALT-associated promyelocytic leukemia bodies (APBs). Enhances formation of telomere C-circles in ALT cells, suggesting a possible role in telomere recombination. Might also be involved in the DNA damage response at telomeres. The polypeptide is Homeobox-containing protein 1 (Homo sapiens (Human)).